A 637-amino-acid polypeptide reads, in one-letter code: Chaperone protein HtpG (637 aa).

Residues 1–345 (MSQQETHGFQ…SNDLPLNVSR (345 aa)) form an a; substrate-binding region. The segment at 346-562 (EILQDNHITK…EGEMSSQMIK (217 aa)) is b. The c stretch occupies residues 563–637 (LMQAAGQPVP…MNQMLLANLK (75 aa)).

It belongs to the heat shock protein 90 family. Homodimer.

The protein localises to the cytoplasm. In terms of biological role, molecular chaperone. Has ATPase activity. The chain is Chaperone protein HtpG from Shewanella sp. (strain ANA-3).